Consider the following 355-residue polypeptide: MSYKLLIINPGSTSTKIGVYENEKELFEETLRHTNEEIKRYETIYDQFQFRKDVILNILKEKNFDITTLSAIVGRGGMLKPVEGGTYAVNDAMIEDLKVGVQGPHASNLGGIIAKSIGDELNIPSFIVDPVVTDELDDVARLSGVPELPRKSKFHALNQKAVAKRYGKDSGKGYENLNLIVVHMGGGVSVGAHKHGKVVDVNNALDGDGPFSPERAGTVPVGDLIKMCFSGQYTESEVYTKIVGKGGFVGYLNTNDVKGVIDKMEAGDKECEKIYKAFLYQITKTIGEMAAALNGKVDQILLTGGIAYSPTLVPDLKSNVEWIAPVTVYPGEDELLALAQGAIRVLDGEEKAKIY.

This sequence belongs to the acetokinase family.

Its subcellular location is the cytoplasm. The catalysed reaction is butanoate + ATP = butanoyl phosphate + ADP. This is Probable butyrate kinase from Clostridium botulinum (strain Alaska E43 / Type E3).